Here is a 393-residue protein sequence, read N- to C-terminus: Formate-dependent phosphoribosylglycinamide formyltransferase (393 aa).

Residues 22-23 (EL) and Glu-82 each bind N(1)-(5-phospho-beta-D-ribosyl)glycinamide. ATP is bound by residues Arg-114, Lys-155, 160–165 (SSGKGQ), 195–198 (EGFI), and Glu-203. Positions 119 to 308 (RLAAEELDLP…QFALHARAIL (190 aa)) constitute an ATP-grasp domain. The Mg(2+) site is built by Glu-267 and Glu-279. N(1)-(5-phospho-beta-D-ribosyl)glycinamide-binding positions include Asp-286, Lys-356, and 363–364 (RR).

The protein belongs to the PurK/PurT family. Homodimer.

It catalyses the reaction N(1)-(5-phospho-beta-D-ribosyl)glycinamide + formate + ATP = N(2)-formyl-N(1)-(5-phospho-beta-D-ribosyl)glycinamide + ADP + phosphate + H(+). It participates in purine metabolism; IMP biosynthesis via de novo pathway; N(2)-formyl-N(1)-(5-phospho-D-ribosyl)glycinamide from N(1)-(5-phospho-D-ribosyl)glycinamide (formate route): step 1/1. Functionally, involved in the de novo purine biosynthesis. Catalyzes the transfer of formate to 5-phospho-ribosyl-glycinamide (GAR), producing 5-phospho-ribosyl-N-formylglycinamide (FGAR). Formate is provided by PurU via hydrolysis of 10-formyl-tetrahydrofolate. In Pseudomonas putida (strain GB-1), this protein is Formate-dependent phosphoribosylglycinamide formyltransferase.